The sequence spans 117 residues: UPF0122 protein Cthe_0771 (117 aa).

Belongs to the UPF0122 family.

In terms of biological role, might take part in the signal recognition particle (SRP) pathway. This is inferred from the conservation of its genetic proximity to ftsY/ffh. May be a regulatory protein. In Acetivibrio thermocellus (strain ATCC 27405 / DSM 1237 / JCM 9322 / NBRC 103400 / NCIMB 10682 / NRRL B-4536 / VPI 7372) (Clostridium thermocellum), this protein is UPF0122 protein Cthe_0771.